The sequence spans 379 residues: Protein COS4 (379 aa).

A run of 4 helical transmembrane segments spans residues 43 to 63 (IYKS…SVWW), 70 to 90 (IYPL…VLVI), 233 to 253 (ISNI…YVSR), and 255 to 275 (MCLL…VQGF).

The protein belongs to the DUP/COS family.

The protein localises to the membrane. The chain is Protein COS4 (COS4) from Saccharomyces cerevisiae (strain ATCC 204508 / S288c) (Baker's yeast).